The sequence spans 229 residues: Putative N-acetylmannosamine-6-phosphate 2-epimerase (229 aa).

This sequence belongs to the NanE family.

It carries out the reaction an N-acyl-D-glucosamine 6-phosphate = an N-acyl-D-mannosamine 6-phosphate. Its pathway is amino-sugar metabolism; N-acetylneuraminate degradation; D-fructose 6-phosphate from N-acetylneuraminate: step 3/5. Its function is as follows. Converts N-acetylmannosamine-6-phosphate (ManNAc-6-P) to N-acetylglucosamine-6-phosphate (GlcNAc-6-P). The sequence is that of Putative N-acetylmannosamine-6-phosphate 2-epimerase from Pediococcus pentosaceus (strain ATCC 25745 / CCUG 21536 / LMG 10740 / 183-1w).